The following is a 67-amino-acid chain: Beta-mammal toxin CeII9 (67 aa).

Residues 1–66 (KEGYLVNHST…VWPLPKKTCN (66 aa)) form the LCN-type CS-alpha/beta domain. 4 disulfides stabilise this stretch: cysteine 12–cysteine 65, cysteine 16–cysteine 41, cysteine 25–cysteine 46, and cysteine 29–cysteine 48.

This sequence belongs to the long (4 C-C) scorpion toxin superfamily. Sodium channel inhibitor family. Beta subfamily. In terms of tissue distribution, expressed by the venom gland.

The protein localises to the secreted. In terms of biological role, beta toxins bind at site-4 of sodium channels and shift the voltage of activation toward more negative potentials thereby affecting sodium channel activation and promoting spontaneous and repetitive firing. This toxin is active against mammals and lethal to mice. Selectively modulates Nav1.4/SCN4A, a sodium channel present in both denervated and innervated skeletal muscle. The chain is Beta-mammal toxin CeII9 from Centruroides elegans (Bark scorpion).